The primary structure comprises 114 residues: Ribonuclease P protein component (114 aa).

It belongs to the RnpA family. As to quaternary structure, consists of a catalytic RNA component (M1 or rnpB) and a protein subunit.

The enzyme catalyses Endonucleolytic cleavage of RNA, removing 5'-extranucleotides from tRNA precursor.. Functionally, RNaseP catalyzes the removal of the 5'-leader sequence from pre-tRNA to produce the mature 5'-terminus. It can also cleave other RNA substrates such as 4.5S RNA. The protein component plays an auxiliary but essential role in vivo by binding to the 5'-leader sequence and broadening the substrate specificity of the ribozyme. The chain is Ribonuclease P protein component from Borrelia hermsii (strain HS1 / DAH).